Here is a 163-residue protein sequence, read N- to C-terminus: SsrA-binding protein (163 aa).

Residues 140-157 (RRGAIAERESKREMDRAL) are compositionally biased toward basic and acidic residues. A disordered region spans residues 140 to 163 (RRGAIAERESKREMDRALARGRRR).

It belongs to the SmpB family.

The protein resides in the cytoplasm. Functionally, required for rescue of stalled ribosomes mediated by trans-translation. Binds to transfer-messenger RNA (tmRNA), required for stable association of tmRNA with ribosomes. tmRNA and SmpB together mimic tRNA shape, replacing the anticodon stem-loop with SmpB. tmRNA is encoded by the ssrA gene; the 2 termini fold to resemble tRNA(Ala) and it encodes a 'tag peptide', a short internal open reading frame. During trans-translation Ala-aminoacylated tmRNA acts like a tRNA, entering the A-site of stalled ribosomes, displacing the stalled mRNA. The ribosome then switches to translate the ORF on the tmRNA; the nascent peptide is terminated with the 'tag peptide' encoded by the tmRNA and targeted for degradation. The ribosome is freed to recommence translation, which seems to be the essential function of trans-translation. This is SsrA-binding protein from Anaeromyxobacter dehalogenans (strain 2CP-C).